We begin with the raw amino-acid sequence, 564 residues long: Excitatory amino acid transporter 4 (564 aa).

At 1–55 (MSSHGNSLFLRESGQRLGRVGWLQRLQESLQQRALRTRLRLQTMTREHVLRFLRR) the chain is on the cytoplasmic side. Ser2 carries the phosphoserine modification. The next 3 membrane-spanning stretches (helical) occupy residues 56 to 76 (NAFI…AFAL), 99 to 119 (MLQM…MASL), and 133 to 153 (VYYM…VTII). 3 N-linked (GlcNAc...) asparagine glycosylation sites follow: Asn216, Asn232, and Asn239. 3 consecutive transmembrane segments (helical) span residues 262 to 285 (SANG…IGGV), 295 to 322 (FFDS…LFLI), and 344 to 365 (LTVI…YFLI). The discontinuously helical intramembrane region spans 371 to 401 (FPFIGGVLQALITAMGTSSSSATLPITFRCL). Residue 388-390 (SSS) participates in L-aspartate binding. The helical transmembrane segment at 411–437 (ITRFVLPVGATVNMDGTALYEALAAIF) threads the bilayer. Residues Gly419, Thr421, and Asn423 each contribute to the Na(+) site. Residues Thr427, 468–472 (IPQAG), Asp501, and Asn508 each bind L-aspartate. The segment at residues 451–484 (ITTISITATAASVGAAGIPQAGLVTMVIVLTSVG) is an intramembrane region (discontinuously helical). The chain crosses the membrane as a helical span at residues 498-519 (WFLDRLRTMTNVLGDSIGAAVI). Asn508 and Asp512 together coordinate Na(+).

This sequence belongs to the dicarboxylate/amino acid:cation symporter (DAACS) (TC 2.A.23) family. SLC1A6 subfamily. In terms of assembly, homotrimer. As to expression, detected in brain, cerebellum and hippocampus.

Its subcellular location is the cell membrane. The enzyme catalyses K(+)(in) + L-glutamate(out) + 3 Na(+)(out) + H(+)(out) = K(+)(out) + L-glutamate(in) + 3 Na(+)(in) + H(+)(in). It catalyses the reaction K(+)(in) + L-aspartate(out) + 3 Na(+)(out) + H(+)(out) = K(+)(out) + L-aspartate(in) + 3 Na(+)(in) + H(+)(in). The catalysed reaction is D-aspartate(out) + K(+)(in) + 3 Na(+)(out) + H(+)(out) = D-aspartate(in) + K(+)(out) + 3 Na(+)(in) + H(+)(in). Sodium-dependent, high-affinity amino acid transporter that mediates the uptake of L-glutamate and also L-aspartate and D-aspartate. Functions as a symporter that transports one amino acid molecule together with two or three Na(+) ions and one proton, in parallel with the counter-transport of one K(+) ion. Mediates Cl(-) flux that is not coupled to amino acid transport; this avoids the accumulation of negative charges due to aspartate and Na(+) symport. Plays a redundant role in the rapid removal of released glutamate from the synaptic cleft, which is essential for terminating the postsynaptic action of glutamate. The chain is Excitatory amino acid transporter 4 (SLC1A6) from Canis lupus familiaris (Dog).